Consider the following 1117-residue polypeptide: MMRPSSRQPYVCWQCLSRKDSGQHIALNTRKARVASLSSLASWPISSASIAPRPTRQWDRTLRLFRERRQGLSTSTSLLGRKIPEISNEALEDFALPLEPDLQHLQDSQPKTTKRSAHLSIRQRLKQWEAENPEPFHSIPSDFALPDRPINAFTSKRSEHMLEIENIDNDNATAQVHDQDLIDTQVTPRVQAGDLVELKSEDWNIGVLAVCLGSFNGIDHFYAVTGKWFASSNFKSGFIVKNFITNSADLQPVIGALPSTVGDMSILVELQKLRAGPTREHGAGLITKMLDFQNTSRQIYQSNLERLSNPHRHLPEEEQLMTLGEIAEFLLPPKLKQSSTGFPPAALYAVYNNIRTFFDDFFHPLGQGTAGPSSIIFHVAARSDIENVARVERMVRDHYSPELLDRKSRREHDRLEPVLRQARLAIDHSRKMREWSSHGMLGPTTRVLPASTYSWSQDALTVIGVIHMWAASDVFPRSSKYQWIGAAVLRALGRYQDADVLDATVGWTFLQEIGWLMPWEIHARHSLRLPGLQVNRAGGLLPSPEEQQPAELDEDVLAPLRQDFYTSTVYCIDAPNAKEIDDGVSLEKTDKEGEYWIHVHIADPTSRIRPDSSLAKRAALMTQTSYLPGHVDKMISDEAVVAEFSLAPGRPSLTFSARLNEEGTLLDHKVTPGRIGDVVYITPQDVATAVGPVDAGIPKVSTPDVVLEVGTPPSAEDEAPTRKMTKPDELSEQNVKDLEILSRLAAAIHKVRIQKGSVPIFLPSPSADFSLVNARIEHTPSGFLACTNDPYISVKYSVSGGLHPIVDDLMGTANQIAALWCYERGIPIPFRTNLLAAQNEEALRAYTQDVIYPQLIAGKQPSLEEMRTLRNLLGGHDIAATPTFIYTMGVDIYTKATSPLRRYSDLLVHWQIQAALLEEHKRLAQGSQSLVIRKFDKYHLKPPMDDKQAARLGLPFTASHLENKVFPHLRVRERHAKTLANIDGRNELILQALVRAWRFGEGKEGQVPEKFTYTVVNVQNTCVRGRIDYFDLWAEIDLDNLAGFSLLSNMRAGDVLTVQLADVNVHMRKIVVKPVEFVQRGPERGRLFAEEQEGEGEVENGGEYIDVEHEVLQPQGR.

In terms of domain architecture, RNB spans 561–916 (RQDFYTSTVY…LVHWQIQAAL (356 aa)). The disordered stretch occupies residues 705–730 (VVLEVGTPPSAEDEAPTRKMTKPDEL). Over residues 719–730 (APTRKMTKPDEL) the composition is skewed to basic and acidic residues.

It belongs to the RNR ribonuclease family. As to quaternary structure, homodimer.

The protein resides in the mitochondrion. Required for RNA 5'- and 3'-end processing and splicing. May act on the RNA processing enzymes directly, or it may act on other regulatory molecules, which influence the activity or synthesis of these enzymes. This Neurospora crassa (strain ATCC 24698 / 74-OR23-1A / CBS 708.71 / DSM 1257 / FGSC 987) protein is Mitochondrial protein cyt-4 (cyt-4).